A 171-amino-acid chain; its full sequence is 2-C-methyl-D-erythritol 2,4-cyclodiphosphate synthase (171 aa).

Residues Asp-8 and His-10 each coordinate a divalent metal cation. 4-CDP-2-C-methyl-D-erythritol 2-phosphate is bound by residues 8–10 and 34–35; these read DVH and HS. His-42 serves as a coordination point for a divalent metal cation. 4-CDP-2-C-methyl-D-erythritol 2-phosphate-binding positions include 56–58, 61–65, 132–135, Phe-139, and Arg-142; these read DIG, FPDTD, and TTTE.

The protein belongs to the IspF family. As to quaternary structure, homotrimer. A divalent metal cation serves as cofactor.

The enzyme catalyses 4-CDP-2-C-methyl-D-erythritol 2-phosphate = 2-C-methyl-D-erythritol 2,4-cyclic diphosphate + CMP. It participates in isoprenoid biosynthesis; isopentenyl diphosphate biosynthesis via DXP pathway; isopentenyl diphosphate from 1-deoxy-D-xylulose 5-phosphate: step 4/6. Functionally, involved in the biosynthesis of isopentenyl diphosphate (IPP) and dimethylallyl diphosphate (DMAPP), two major building blocks of isoprenoid compounds. Catalyzes the conversion of 4-diphosphocytidyl-2-C-methyl-D-erythritol 2-phosphate (CDP-ME2P) to 2-C-methyl-D-erythritol 2,4-cyclodiphosphate (ME-CPP) with a corresponding release of cytidine 5-monophosphate (CMP). The sequence is that of 2-C-methyl-D-erythritol 2,4-cyclodiphosphate synthase from Geotalea daltonii (strain DSM 22248 / JCM 15807 / FRC-32) (Geobacter daltonii).